Consider the following 679-residue polypeptide: Glycine--tRNA ligase beta subunit (679 aa).

It belongs to the class-II aminoacyl-tRNA synthetase family. Tetramer of two alpha and two beta subunits.

It is found in the cytoplasm. It carries out the reaction tRNA(Gly) + glycine + ATP = glycyl-tRNA(Gly) + AMP + diphosphate. This chain is Glycine--tRNA ligase beta subunit, found in Streptococcus pyogenes serotype M4 (strain MGAS10750).